Here is a 284-residue protein sequence, read N- to C-terminus: RNase adapter protein RapZ (284 aa).

8–15 (GRSGSGKS) lines the ATP pocket. Residue 56–59 (DVRN) coordinates GTP. Residues 266-284 (RSRGKNVQSRHRTLEKRKT) are RNA-binding.

Belongs to the RapZ-like family. RapZ subfamily. As to quaternary structure, homotrimer.

Functionally, modulates the synthesis of GlmS, by affecting the processing and stability of the regulatory small RNA GlmZ. When glucosamine-6-phosphate (GlcN6P) concentrations are high in the cell, RapZ binds GlmZ and targets it to cleavage by RNase E. Consequently, GlmZ is inactivated and unable to activate GlmS synthesis. Under low GlcN6P concentrations, RapZ is sequestered and inactivated by an other regulatory small RNA, GlmY, preventing GlmZ degradation and leading to synthesis of GlmS. The sequence is that of RNase adapter protein RapZ from Salmonella typhi.